A 250-amino-acid chain; its full sequence is 1-(5-phosphoribosyl)-5-[(5-phosphoribosylamino)methylideneamino] imidazole-4-carboxamide isomerase (250 aa).

Residue Asp8 is the Proton acceptor of the active site. The Proton donor role is filled by Asp131.

It belongs to the HisA/HisF family.

Its subcellular location is the cytoplasm. The enzyme catalyses 1-(5-phospho-beta-D-ribosyl)-5-[(5-phospho-beta-D-ribosylamino)methylideneamino]imidazole-4-carboxamide = 5-[(5-phospho-1-deoxy-D-ribulos-1-ylimino)methylamino]-1-(5-phospho-beta-D-ribosyl)imidazole-4-carboxamide. The protein operates within amino-acid biosynthesis; L-histidine biosynthesis; L-histidine from 5-phospho-alpha-D-ribose 1-diphosphate: step 4/9. The polypeptide is 1-(5-phosphoribosyl)-5-[(5-phosphoribosylamino)methylideneamino] imidazole-4-carboxamide isomerase (Paraburkholderia phymatum (strain DSM 17167 / CIP 108236 / LMG 21445 / STM815) (Burkholderia phymatum)).